Consider the following 537-residue polypeptide: Putative cysteine ligase BshC (537 aa).

A coiled-coil region spans residues 422–450; that stretch reads IEKVEGMIEQQRRLNKDLLDEVAGNQNNI.

It belongs to the BshC family.

Involved in bacillithiol (BSH) biosynthesis. May catalyze the last step of the pathway, the addition of cysteine to glucosamine malate (GlcN-Mal) to generate BSH. The polypeptide is Putative cysteine ligase BshC (Staphylococcus aureus (strain COL)).